A 423-amino-acid chain; its full sequence is Ferrochelatase, mitochondrial (423 aa).

A mitochondrion-targeting transit peptide spans 1 to 29; sequence MISRKIISTINSKTFYNKSLSYCTVNNNK. C173 serves as a coordination point for [2Fe-2S] cluster. Catalysis depends on residues H207 and D380. Positions 401, 404, and 411 each coordinate [2Fe-2S] cluster.

The protein belongs to the ferrochelatase family. In terms of assembly, monomer. It depends on [2Fe-2S] cluster as a cofactor.

The protein resides in the mitochondrion inner membrane. The enzyme catalyses heme b + 2 H(+) = protoporphyrin IX + Fe(2+). Its pathway is porphyrin-containing compound metabolism; protoheme biosynthesis; protoheme from protoporphyrin-IX: step 1/1. Functionally, catalyzes the ferrous insertion into protoporphyrin IX. The polypeptide is Ferrochelatase, mitochondrial (hemH) (Dictyostelium discoideum (Social amoeba)).